Here is a 252-residue protein sequence, read N- to C-terminus: Triosephosphate isomerase (252 aa).

9-11 (NWK) contacts substrate. Catalysis depends on histidine 96, which acts as the Electrophile. Glutamate 166 (proton acceptor) is an active-site residue. Residues glycine 172, serine 212, and 233-234 (GG) each bind substrate.

The protein belongs to the triosephosphate isomerase family. In terms of assembly, homodimer.

It is found in the cytoplasm. The enzyme catalyses D-glyceraldehyde 3-phosphate = dihydroxyacetone phosphate. The protein operates within carbohydrate biosynthesis; gluconeogenesis. It participates in carbohydrate degradation; glycolysis; D-glyceraldehyde 3-phosphate from glycerone phosphate: step 1/1. Involved in the gluconeogenesis. Catalyzes stereospecifically the conversion of dihydroxyacetone phosphate (DHAP) to D-glyceraldehyde-3-phosphate (G3P). The sequence is that of Triosephosphate isomerase from Chlorobium chlorochromatii (strain CaD3).